Here is a 294-residue protein sequence, read N- to C-terminus: MLENLSTEHRNEKTMNLDEMSIKEVLQSMNEEDRTVALAVEKEIEHIEKVVRVVIQSFEEEGRLIYIGAGTSGRLGILDAVECPPTFGTDDKMVQGFIAGGLKAFTKAVEGAEDREELAEEDLKSIGLNEKDTVIGIAASGRTPYVIGGLKYAHSVGASTASISCNKNAEISKYAKLNVEVETGAEILTGSTRLKAGTAQKLVLNMISTASMIGVGKVYKNLMVDVQSTNEKLVERSKRIIVEATGVSYEVAAEHYEKAERNVKAAIVMVLLQCEYGEALEKLKVAKGFVKKAL.

One can recognise an SIS domain in the interval 54-217 (VIQSFEEEGR…STASMIGVGK (164 aa)). Residue Glu82 is the Proton donor of the active site. Residue Glu113 is part of the active site.

This sequence belongs to the GCKR-like family. MurNAc-6-P etherase subfamily. As to quaternary structure, homodimer.

It carries out the reaction N-acetyl-D-muramate 6-phosphate + H2O = N-acetyl-D-glucosamine 6-phosphate + (R)-lactate. Its pathway is amino-sugar metabolism; N-acetylmuramate degradation. Its function is as follows. Specifically catalyzes the cleavage of the D-lactyl ether substituent of MurNAc 6-phosphate, producing GlcNAc 6-phosphate and D-lactate. The sequence is that of N-acetylmuramic acid 6-phosphate etherase from Bacillus thuringiensis subsp. konkukian (strain 97-27).